The primary structure comprises 449 residues: Phosphoglucosamine mutase (449 aa).

Catalysis depends on Ser102, which acts as the Phosphoserine intermediate. Mg(2+)-binding residues include Ser102, Asp243, Asp245, and Asp247. Ser102 bears the Phosphoserine mark.

It belongs to the phosphohexose mutase family. The cofactor is Mg(2+). In terms of processing, activated by phosphorylation.

The enzyme catalyses alpha-D-glucosamine 1-phosphate = D-glucosamine 6-phosphate. Functionally, catalyzes the conversion of glucosamine-6-phosphate to glucosamine-1-phosphate. The polypeptide is Phosphoglucosamine mutase (Maricaulis maris (strain MCS10) (Caulobacter maris)).